The following is a 561-amino-acid chain: BTB/POZ domain-containing protein At2g46260 (561 aa).

Disordered regions lie at residues 1 to 31 (MRGSNNTDLFDPKTEMDSNFSRHGSSSEGDF) and 100 to 119 (LTDNNQPDMDDAPGGDNLDD). Over residues 17 to 28 (DSNFSRHGSSSE) the composition is skewed to polar residues. Residues 107–119 (DMDDAPGGDNLDD) show a composition bias toward acidic residues. In terms of domain architecture, BTB spans 143-212 (IDCSTVVRVK…MYSNSLSVTT (70 aa)). A BACK domain is found at 266–358 (QPLTDAAKQF…YMTCRKLKKV (93 aa)).

It functions in the pathway protein modification; protein ubiquitination. May act as a substrate-specific adapter of an E3 ubiquitin-protein ligase complex (CUL3-RBX1-BTB) which mediates the ubiquitination and subsequent proteasomal degradation of target proteins. This is BTB/POZ domain-containing protein At2g46260 from Arabidopsis thaliana (Mouse-ear cress).